The sequence spans 748 residues: Catalase-peroxidase (748 aa).

A cross-link (tryptophyl-tyrosyl-methioninium (Trp-Tyr) (with M-268)) is located at residues 91–242 (WHSAGTYRIG…LAAVQMGLIY (152 aa)). The active-site Proton acceptor is the His92. Positions 194–223 (DRYGKGKGSSSQGEIPADAHRHGQEQARTA) are disordered. A cross-link (tryptophyl-tyrosyl-methioninium (Tyr-Met) (with W-91)) is located at residues 242–268 (YVNPEGPEGNPDPLAAAHDIRETFARM). His283 is a binding site for heme b. Residues 288–310 (THGAGDAKHVGREPEGEDMDSQG) are disordered. A compositionally biased stretch (basic and acidic residues) spans 290–301 (GAGDAKHVGREP).

It belongs to the peroxidase family. Peroxidase/catalase subfamily. As to quaternary structure, homodimer or homotetramer. Requires heme b as cofactor. In terms of processing, formation of the three residue Trp-Tyr-Met cross-link is important for the catalase, but not the peroxidase activity of the enzyme.

It catalyses the reaction H2O2 + AH2 = A + 2 H2O. The catalysed reaction is 2 H2O2 = O2 + 2 H2O. Bifunctional enzyme with both catalase and broad-spectrum peroxidase activity. The protein is Catalase-peroxidase of Herbaspirillum seropedicae.